The primary structure comprises 366 residues: Sulfate/thiosulfate import ATP-binding protein CysA 2 (366 aa).

The ABC transporter domain maps to 14-243 (LSVHALCRRF…PASRFVAEFV (230 aa)). Residue 46–53 (GPSGCGKT) coordinates ATP.

It belongs to the ABC transporter superfamily. Sulfate/tungstate importer (TC 3.A.1.6) family. The complex is composed of two ATP-binding proteins (CysA), two transmembrane proteins (CysT and CysW) and a solute-binding protein (CysP).

It localises to the cell inner membrane. It carries out the reaction sulfate(out) + ATP + H2O = sulfate(in) + ADP + phosphate + H(+). It catalyses the reaction thiosulfate(out) + ATP + H2O = thiosulfate(in) + ADP + phosphate + H(+). Its function is as follows. Part of the ABC transporter complex CysAWTP involved in sulfate/thiosulfate import. Responsible for energy coupling to the transport system. This is Sulfate/thiosulfate import ATP-binding protein CysA 2 from Chromobacterium violaceum (strain ATCC 12472 / DSM 30191 / JCM 1249 / CCUG 213 / NBRC 12614 / NCIMB 9131 / NCTC 9757 / MK).